The primary structure comprises 34 residues: MSDIN-like toxin proprotein 4 (34 aa).

Residues 1 to 10 constitute a propeptide that is removed on maturation; it reads MSDINATRLP. The segment at residues 11–17 is a cross-link (cyclopeptide (Val-Pro)); sequence VWIGYSP. Positions 18–34 are excised as a propeptide; it reads CVGDDCIALLTRGEGLC.

It belongs to the MSDIN fungal toxin family. In terms of processing, processed by the macrocyclase-peptidase enzyme POPB to yield a toxic cyclic heptapeptide. POPB first removes 10 residues from the N-terminus. Conformational trapping of the remaining peptide forces the enzyme to release this intermediate rather than proceed to macrocyclization. The enzyme rebinds the remaining peptide in a different conformation and catalyzes macrocyclization of the N-terminal 7 residues. In terms of tissue distribution, expressed in basidiocarps.

Functionally, probable toxin that belongs to the MSDIN-like toxin family responsible for a large number of food poisoning cases and deaths. The protein is MSDIN-like toxin proprotein 4 of Amanita exitialis (Guangzhou destroying angel).